We begin with the raw amino-acid sequence, 109 residues long: Nucleoid-associated protein Swoo_1794 (109 aa).

The segment at 88 to 109 (QKDKMAEVTGGMQLPPGMKMPF) is disordered.

It belongs to the YbaB/EbfC family. As to quaternary structure, homodimer.

It localises to the cytoplasm. Its subcellular location is the nucleoid. Functionally, binds to DNA and alters its conformation. May be involved in regulation of gene expression, nucleoid organization and DNA protection. This Shewanella woodyi (strain ATCC 51908 / MS32) protein is Nucleoid-associated protein Swoo_1794.